Here is a 496-residue protein sequence, read N- to C-terminus: Genome polyprotein (496 aa).

Residues 1-447 (SRCTHLENRD…HTVLGGAFNS (447 aa)) are Extracellular-facing. Disulfide bonds link C3/C30, C60/C116, C60/C121, C74/C105, C92/C116, and C92/C121. The tract at residues 98–111 (DRGWGNHCGLFGKG) is fusion peptide. N154 is a glycosylation site (N-linked (GlcNAc...) asparagine; by host). 2 disulfide bridges follow: C186-C290 and C307-C338. Residues 448-468 (IFGGVGFLPKLLMGVALAWLG) form a helical membrane-spanning segment. Topologically, residues 469 to 479 (LNTRNPTMSMS) are cytoplasmic. A helical membrane pass occupies residues 480-496 (FLLTGGLVLAMTLGVGA).

Homodimer; in the endoplasmic reticulum and Golgi. Post-translationally, N-glycosylated.

Its subcellular location is the virion membrane. It is found in the host endoplasmic reticulum membrane. Binds to host cell surface receptor and mediates fusion between viral and cellular membranes. Envelope protein is synthesized in the endoplasmic reticulum in the form of heterodimer with protein prM. They play a role in virion budding in the ER, and the newly formed immature particle is covered with 60 spikes composed of heterodimer between precursor prM and envelope protein E. The virion is transported to the Golgi apparatus where the low pH causes dissociation of PrM-E heterodimers and formation of E homodimers. prM-E cleavage is ineficient, and many virions are only partially matured. These uncleaved prM would play a role in immune evasion. The chain is Genome polyprotein from Bos taurus (Bovine).